We begin with the raw amino-acid sequence, 238 residues long: Small ribosomal subunit protein uS2 (238 aa).

This sequence belongs to the universal ribosomal protein uS2 family.

This Moorella thermoacetica (strain ATCC 39073 / JCM 9320) protein is Small ribosomal subunit protein uS2.